A 256-amino-acid polypeptide reads, in one-letter code: Acetyl-coenzyme A carboxylase carboxyl transferase subunit alpha (256 aa).

In terms of domain architecture, CoA carboxyltransferase C-terminal spans 1–236; it reads MSDVARILKE…KTAIVDELAE (236 aa).

It belongs to the AccA family. In terms of assembly, acetyl-CoA carboxylase is a heterohexamer composed of biotin carboxyl carrier protein (AccB), biotin carboxylase (AccC) and two subunits each of ACCase subunit alpha (AccA) and ACCase subunit beta (AccD).

It localises to the cytoplasm. It carries out the reaction N(6)-carboxybiotinyl-L-lysyl-[protein] + acetyl-CoA = N(6)-biotinyl-L-lysyl-[protein] + malonyl-CoA. It functions in the pathway lipid metabolism; malonyl-CoA biosynthesis; malonyl-CoA from acetyl-CoA: step 1/1. Functionally, component of the acetyl coenzyme A carboxylase (ACC) complex. First, biotin carboxylase catalyzes the carboxylation of biotin on its carrier protein (BCCP) and then the CO(2) group is transferred by the carboxyltransferase to acetyl-CoA to form malonyl-CoA. The chain is Acetyl-coenzyme A carboxylase carboxyl transferase subunit alpha from Streptococcus thermophilus (strain ATCC BAA-491 / LMD-9).